A 258-amino-acid chain; its full sequence is Small ribosomal subunit protein mS23 (258 aa).

It belongs to the mitochondrion-specific ribosomal protein mS23 family. Component of the mitochondrial small ribosomal subunit.

It is found in the mitochondrion. The sequence is that of Small ribosomal subunit protein mS23 from Aspergillus fumigatus (strain CBS 144.89 / FGSC A1163 / CEA10) (Neosartorya fumigata).